The chain runs to 203 residues: GTP cyclohydrolase-2 (203 aa).

49 to 53 is a GTP binding site; that stretch reads RIHSE. Cys-54, Cys-65, and Cys-67 together coordinate Zn(2+). GTP-binding positions include Gln-70, 92–94, and Thr-114; that span reads EGR. Catalysis depends on Asp-126, which acts as the Proton acceptor. The active-site Nucleophile is the Arg-128. GTP is bound by residues Thr-149 and Lys-154.

Belongs to the GTP cyclohydrolase II family. It depends on Zn(2+) as a cofactor.

It carries out the reaction GTP + 4 H2O = 2,5-diamino-6-hydroxy-4-(5-phosphoribosylamino)-pyrimidine + formate + 2 phosphate + 3 H(+). The protein operates within cofactor biosynthesis; riboflavin biosynthesis; 5-amino-6-(D-ribitylamino)uracil from GTP: step 1/4. Functionally, catalyzes the conversion of GTP to 2,5-diamino-6-ribosylamino-4(3H)-pyrimidinone 5'-phosphate (DARP), formate and pyrophosphate. The sequence is that of GTP cyclohydrolase-2 from Shewanella sp. (strain MR-7).